Consider the following 392-residue polypeptide: NAD(P)H-quinone oxidoreductase subunit H (392 aa).

Belongs to the complex I 49 kDa subunit family. In terms of assembly, NDH-1 can be composed of about 15 different subunits; different subcomplexes with different compositions have been identified which probably have different functions.

The protein resides in the cellular thylakoid membrane. It carries out the reaction a plastoquinone + NADH + (n+1) H(+)(in) = a plastoquinol + NAD(+) + n H(+)(out). It catalyses the reaction a plastoquinone + NADPH + (n+1) H(+)(in) = a plastoquinol + NADP(+) + n H(+)(out). Functionally, NDH-1 shuttles electrons from an unknown electron donor, via FMN and iron-sulfur (Fe-S) centers, to quinones in the respiratory and/or the photosynthetic chain. The immediate electron acceptor for the enzyme in this species is believed to be plastoquinone. Couples the redox reaction to proton translocation, and thus conserves the redox energy in a proton gradient. Cyanobacterial NDH-1 also plays a role in inorganic carbon-concentration. This Synechococcus sp. (strain JA-2-3B'a(2-13)) (Cyanobacteria bacterium Yellowstone B-Prime) protein is NAD(P)H-quinone oxidoreductase subunit H.